A 473-amino-acid chain; its full sequence is N-lysine methyltransferase SETD6 (473 aa).

Lys39 is subject to N6-methylated lysine; by autocatalysis. In terms of domain architecture, SET spans 60 to 286; it reads PPAQVAVSRQ…KGHEIFNTYG (227 aa). 73-75 is a binding site for S-adenosyl-L-methionine; it reads AGY. Position 122 (Trp122) interacts with substrate. Lys179 is subject to N6-methylated lysine; by autocatalysis. Tyr223 is a binding site for S-adenosyl-L-methionine. Substrate is bound by residues Ser224 and Gln226. 251 to 252 contributes to the S-adenosyl-L-methionine binding site; the sequence is NH. Substrate contacts are provided by Tyr262 and Tyr297. Residue Tyr297 coordinates S-adenosyl-L-methionine. Lys372 carries the post-translational modification N6-methylated lysine; by autocatalysis.

This sequence belongs to the class V-like SAM-binding methyltransferase superfamily. Histone-lysine methyltransferase family. SETD6 subfamily. In terms of assembly, monomer, homodimer and homotrimer; these structures are stabilized in the presence of S-adenosyl-L-methionine (SAM). In terms of processing, automethylated; Lys-39 and Lys-179 serve as the major automethylation sites.

Its subcellular location is the nucleus. The enzyme catalyses L-lysyl-[protein] + S-adenosyl-L-methionine = N(6)-methyl-L-lysyl-[protein] + S-adenosyl-L-homocysteine + H(+). It catalyses the reaction L-lysyl(8)-[histone H2AZ] + S-adenosyl-L-methionine = N(6)-methyl-L-lysyl(8)-[histone H2AZ] + S-adenosyl-L-homocysteine + H(+). With respect to regulation, activated by automethylation. Protein-lysine N-methyltransferase. Monomethylates 'Lys-310' of the RELA subunit of NF-kappa-B complex, leading to down-regulation of NF-kappa-B transcription factor activity. Monomethylates 'Lys-8' of H2AZ (H2AZK8me1). Required for the maintenance of embryonic stem cell self-renewal. Methylates PAK4. The sequence is that of N-lysine methyltransferase SETD6 from Homo sapiens (Human).